The chain runs to 461 residues: D-phenylhydantoinase (461 aa).

A divalent metal cation contacts are provided by His59, His61, and Lys151. Lys151 carries the post-translational modification N6-carboxylysine. Tyr156 serves as a coordination point for substrate. A divalent metal cation is bound by residues His182 and His239. Ser286 contacts substrate. Asp313 serves as a coordination point for a divalent metal cation. Asn335 serves as a coordination point for substrate.

This sequence belongs to the metallo-dependent hydrolases superfamily. Hydantoinase/dihydropyrimidinase family. As to quaternary structure, homotetramer. A divalent metal cation is required as a cofactor. Carboxylation allows a single lysine to coordinate two divalent metal cations.

The enzyme catalyses D-5-phenylhydantoin + H2O = N-carbamoyl-D-phenylglycine + H(+). Its function is as follows. Catalyzes the stereospecific hydrolysis of the cyclic amide bond of D-hydantoin derivatives with an aromatic side chains at the 5'-position. Has no activity on dihydropyrimidines. The physiological function is unknown. The chain is D-phenylhydantoinase from Escherichia coli (strain UTI89 / UPEC).